A 372-amino-acid chain; its full sequence is tRNA-specific 2-thiouridylase MnmA (372 aa).

ATP is bound by residues 16-23 (GMSGGVDS) and Met-42. Residues 102–104 (NPD) form an interaction with target base in tRNA region. Residue Cys-107 is the Nucleophile of the active site. Cysteines 107 and 205 form a disulfide. An ATP-binding site is contributed by Gly-132. The segment at 155–157 (KDQ) is interaction with tRNA. Residue Cys-205 is the Cysteine persulfide intermediate of the active site. The segment at 317-318 (RY) is interaction with tRNA.

It belongs to the MnmA/TRMU family.

It is found in the cytoplasm. The enzyme catalyses S-sulfanyl-L-cysteinyl-[protein] + uridine(34) in tRNA + AH2 + ATP = 2-thiouridine(34) in tRNA + L-cysteinyl-[protein] + A + AMP + diphosphate + H(+). In terms of biological role, catalyzes the 2-thiolation of uridine at the wobble position (U34) of tRNA, leading to the formation of s(2)U34. This is tRNA-specific 2-thiouridylase MnmA from Shewanella oneidensis (strain ATCC 700550 / JCM 31522 / CIP 106686 / LMG 19005 / NCIMB 14063 / MR-1).